The sequence spans 164 residues: ATP synthase subunit b (164 aa).

The helical transmembrane segment at 10-30 threads the bilayer; the sequence is LLISQIVNFCLLAFLLNTFLY.

This sequence belongs to the ATPase B chain family. In terms of assembly, F-type ATPases have 2 components, F(1) - the catalytic core - and F(0) - the membrane proton channel. F(1) has five subunits: alpha(3), beta(3), gamma(1), delta(1), epsilon(1). F(0) has three main subunits: a(1), b(2) and c(10-14). The alpha and beta chains form an alternating ring which encloses part of the gamma chain. F(1) is attached to F(0) by a central stalk formed by the gamma and epsilon chains, while a peripheral stalk is formed by the delta and b chains.

Its subcellular location is the cell membrane. F(1)F(0) ATP synthase produces ATP from ADP in the presence of a proton or sodium gradient. F-type ATPases consist of two structural domains, F(1) containing the extramembraneous catalytic core and F(0) containing the membrane proton channel, linked together by a central stalk and a peripheral stalk. During catalysis, ATP synthesis in the catalytic domain of F(1) is coupled via a rotary mechanism of the central stalk subunits to proton translocation. In terms of biological role, component of the F(0) channel, it forms part of the peripheral stalk, linking F(1) to F(0). The chain is ATP synthase subunit b from Herpetosiphon aurantiacus (strain ATCC 23779 / DSM 785 / 114-95).